Consider the following 93-residue polypeptide: Small ribosomal subunit protein bS18 (93 aa).

This sequence belongs to the bacterial ribosomal protein bS18 family. In terms of assembly, part of the 30S ribosomal subunit. Forms a tight heterodimer with protein bS6.

Its function is as follows. Binds as a heterodimer with protein bS6 to the central domain of the 16S rRNA, where it helps stabilize the platform of the 30S subunit. The polypeptide is Small ribosomal subunit protein bS18 (Variovorax paradoxus (strain S110)).